A 271-amino-acid polypeptide reads, in one-letter code: Type III pantothenate kinase (271 aa).

Residue 6–13 (DVRNTHTV) participates in ATP binding. A substrate-binding site is contributed by 109-112 (GADR). Residue Asp111 is the Proton acceptor of the active site. Asp131 is a binding site for K(+). Residue Ser134 coordinates ATP. Thr186 serves as a coordination point for substrate.

The protein belongs to the type III pantothenate kinase family. Homodimer. Requires NH4(+) as cofactor. K(+) is required as a cofactor.

Its subcellular location is the cytoplasm. The catalysed reaction is (R)-pantothenate + ATP = (R)-4'-phosphopantothenate + ADP + H(+). It participates in cofactor biosynthesis; coenzyme A biosynthesis; CoA from (R)-pantothenate: step 1/5. In terms of biological role, catalyzes the phosphorylation of pantothenate (Pan), the first step in CoA biosynthesis. This is Type III pantothenate kinase from Mycolicibacterium smegmatis (strain ATCC 700084 / mc(2)155) (Mycobacterium smegmatis).